Here is a 217-residue protein sequence, read N- to C-terminus: GTP-binding protein Rit2 (217 aa).

GTP-binding positions include 27–34 (GAGGVGKS), 74–78 (DTAGQ), and 133–136 (NKID).

This sequence belongs to the small GTPase superfamily. Ras family. In terms of assembly, interacts with AFDN, the C-terminal domain of RALGDS and RLF, but not with RIN1 and PIK3CA. RLF binds exclusively to the active GTP-bound form. Binds calmodulin. Interacts with PLXNB3.

The protein localises to the nucleus. It localises to the cell membrane. It catalyses the reaction GTP + H2O = GDP + phosphate + H(+). Its activity is regulated as follows. Alternates between an inactive form bound to GDP and an active form bound to GTP. Functionally, binds and exchanges GTP and GDP. The protein is GTP-binding protein Rit2 (Rit2) of Rattus norvegicus (Rat).